The primary structure comprises 143 residues: Small ribosomal subunit protein uS9 (143 aa).

The interval 123 to 143 (RPEPKKFGGRGARARFQKSYR) is disordered. The span at 134–143 (ARARFQKSYR) shows a compositional bias: basic residues.

It belongs to the universal ribosomal protein uS9 family.

This chain is Small ribosomal subunit protein uS9 (RPS16), found in Eremothecium gossypii (strain ATCC 10895 / CBS 109.51 / FGSC 9923 / NRRL Y-1056) (Yeast).